Here is a 154-residue protein sequence, read N- to C-terminus: Myoglobin (154 aa).

Residues 2–148 (GLSDGEWQLV…FRNDMAAQYK (147 aa)) form the Globin domain. Serine 4 is subject to Phosphoserine. Histidine 65 lines the nitrite pocket. Histidine 65 is an O2 binding site. Threonine 68 carries the phosphothreonine modification. A heme b-binding site is contributed by histidine 94.

This sequence belongs to the globin family. Monomeric.

It localises to the cytoplasm. The protein localises to the sarcoplasm. It catalyses the reaction Fe(III)-heme b-[protein] + nitric oxide + H2O = Fe(II)-heme b-[protein] + nitrite + 2 H(+). The enzyme catalyses H2O2 + AH2 = A + 2 H2O. In terms of biological role, monomeric heme protein which primary function is to store oxygen and facilitate its diffusion within muscle tissues. Reversibly binds oxygen through a pentacoordinated heme iron and enables its timely and efficient release as needed during periods of heightened demand. Depending on the oxidative conditions of tissues and cells, and in addition to its ability to bind oxygen, it also has a nitrite reductase activity whereby it regulates the production of bioactive nitric oxide. Under stress conditions, like hypoxia and anoxia, it also protects cells against reactive oxygen species thanks to its pseudoperoxidase activity. The protein is Myoglobin (MB) of Bos mutus grunniens (Wild yak).